Reading from the N-terminus, the 157-residue chain is Pyruvoyl-dependent arginine decarboxylase (157 aa).

Position 44 is a pyruvic acid (Ser) (serine 44).

It belongs to the PdaD family. Pyruvate serves as cofactor.

It carries out the reaction L-arginine + H(+) = agmatine + CO2. The sequence is that of Pyruvoyl-dependent arginine decarboxylase from Thermococcus kodakarensis (strain ATCC BAA-918 / JCM 12380 / KOD1) (Pyrococcus kodakaraensis (strain KOD1)).